Here is a 533-residue protein sequence, read N- to C-terminus: Na(+)/H(+) antiporter NhaB (533 aa).

A run of 10 helical transmembrane segments spans residues Phe28 to Leu50, Pro67 to Leu87, Val96 to Phe116, Val131 to Ile165, Val254 to Gly274, Leu316 to Ile336, Leu364 to Ile384, Leu396 to Gly416, Ala454 to Ile474, and Met481 to Gln501.

The protein belongs to the NhaB Na(+)/H(+) (TC 2.A.34) antiporter family.

It localises to the cell inner membrane. The catalysed reaction is 2 Na(+)(in) + 3 H(+)(out) = 2 Na(+)(out) + 3 H(+)(in). In terms of biological role, na(+)/H(+) antiporter that extrudes sodium in exchange for external protons. This Shewanella baltica (strain OS195) protein is Na(+)/H(+) antiporter NhaB.